The sequence spans 102 residues: Co-chaperonin GroES (102 aa).

The protein belongs to the GroES chaperonin family. As to quaternary structure, heptamer of 7 subunits arranged in a ring. Interacts with the chaperonin GroEL.

Its subcellular location is the cytoplasm. Functionally, together with the chaperonin GroEL, plays an essential role in assisting protein folding. The GroEL-GroES system forms a nano-cage that allows encapsulation of the non-native substrate proteins and provides a physical environment optimized to promote and accelerate protein folding. GroES binds to the apical surface of the GroEL ring, thereby capping the opening of the GroEL channel. This chain is Co-chaperonin GroES, found in Anabaena sp. (strain L31).